The following is a 218-amino-acid chain: 3-dehydroquinate dehydratase (218 aa).

3-dehydroquinate contacts are provided by residues glutamate 29–arginine 31 and arginine 56. Catalysis depends on histidine 116, which acts as the Proton donor/acceptor. The active-site Schiff-base intermediate with substrate is the lysine 142. 3-dehydroquinate is bound by residues arginine 180, serine 200, and glutamine 204.

Belongs to the type-I 3-dehydroquinase family. In terms of assembly, homodimer.

The catalysed reaction is 3-dehydroquinate = 3-dehydroshikimate + H2O. Its pathway is metabolic intermediate biosynthesis; chorismate biosynthesis; chorismate from D-erythrose 4-phosphate and phosphoenolpyruvate: step 3/7. Functionally, involved in the third step of the chorismate pathway, which leads to the biosynthesis of aromatic amino acids. Catalyzes the cis-dehydration of 3-dehydroquinate (DHQ) and introduces the first double bond of the aromatic ring to yield 3-dehydroshikimate. This is 3-dehydroquinate dehydratase from Methanococcus vannielii (strain ATCC 35089 / DSM 1224 / JCM 13029 / OCM 148 / SB).